Reading from the N-terminus, the 313-residue chain is Porphobilinogen deaminase (313 aa).

Cys-241 is modified (S-(dipyrrolylmethanemethyl)cysteine).

It belongs to the HMBS family. Monomer. The cofactor is dipyrromethane.

It carries out the reaction 4 porphobilinogen + H2O = hydroxymethylbilane + 4 NH4(+). It participates in porphyrin-containing compound metabolism; protoporphyrin-IX biosynthesis; coproporphyrinogen-III from 5-aminolevulinate: step 2/4. Its pathway is porphyrin-containing compound metabolism; chlorophyll biosynthesis. In terms of biological role, tetrapolymerization of the monopyrrole PBG into the hydroxymethylbilane pre-uroporphyrinogen in several discrete steps. The polypeptide is Porphobilinogen deaminase (Chlorobium phaeobacteroides (strain DSM 266 / SMG 266 / 2430)).